Here is a 415-residue protein sequence, read N- to C-terminus: WD-40 repeat-containing protein MSI2 (415 aa).

WD repeat units follow at residues 166 to 206, 215 to 255, 258 to 298, 302 to 342, and 361 to 401; these read GHDK…QDKV, GHES…MQHQ, VHER…APLH, SHEG…EEQL, and GHKA…YRDE. Residues 232–248 carry the DWD box motif; the sequence is LFGSAGEDGRLVIWDTR.

Belongs to the WD repeat RBAP46/RBAP48/MSI1 family.

The protein resides in the nucleus. Functionally, core histone-binding subunit that may target chromatin assembly factors, chromatin remodeling factors and histone deacetylases to their histone substrates in a manner that is regulated by nucleosomal DNA. In Arabidopsis thaliana (Mouse-ear cress), this protein is WD-40 repeat-containing protein MSI2 (MSI2).